Consider the following 371-residue polypeptide: Cytochrome b (371 aa).

Helical transmembrane passes span 25-45, 69-90, 105-125, and 170-190; these read FGSM…FLAV, WMMQ…YIHI, WMSG…GYVL, and FFAL…LHII. Residues histidine 75 and histidine 89 each contribute to the heme b site. Heme b contacts are provided by histidine 174 and histidine 188. A ubiquinone is bound at residue histidine 193. 4 consecutive transmembrane segments (helical) span residues 218–238, 280–300, 312–332, and 339–358; these read YKDL…VSFF, LGGA…PFTH, LSQL…WAAT, and YIII…ISMP.

Belongs to the cytochrome b family. In terms of assembly, the cytochrome bc1 complex contains 3 respiratory subunits (MT-CYB, CYC1 and UQCRFS1), 2 core proteins (UQCRC1 and UQCRC2) and probably 6 low-molecular weight proteins. The cofactor is heme b.

The protein localises to the mitochondrion inner membrane. In terms of biological role, component of the ubiquinol-cytochrome c reductase complex (complex III or cytochrome b-c1 complex) that is part of the mitochondrial respiratory chain. The b-c1 complex mediates electron transfer from ubiquinol to cytochrome c. Contributes to the generation of a proton gradient across the mitochondrial membrane that is then used for ATP synthesis. The protein is Cytochrome b (MT-CYB) of Python molurus (Indian python).